The chain runs to 433 residues: Protein translocase subunit SecY (433 aa).

Transmembrane regions (helical) follow at residues 17–37, 71–91, 117–137, 141–161, 184–204, 212–232, 268–288, 310–330, 366–386, and 388–408; these read IVFT…PIPG, IFAL…LMSV, LTVL…ESIV, GPVV…TLVV, LIIF…MFEL, PLIA…IIFF, GVIP…LANF, YILL…AIVF, LTVI…LLMN, and YVIS…VVLD.

It belongs to the SecY/SEC61-alpha family. Component of the Sec protein translocase complex. Heterotrimer consisting of SecY, SecE and SecG subunits. The heterotrimers can form oligomers, although 1 heterotrimer is thought to be able to translocate proteins. Interacts with the ribosome. Interacts with SecDF, and other proteins may be involved. Interacts with SecA.

It is found in the cell inner membrane. Its function is as follows. The central subunit of the protein translocation channel SecYEG. Consists of two halves formed by TMs 1-5 and 6-10. These two domains form a lateral gate at the front which open onto the bilayer between TMs 2 and 7, and are clamped together by SecE at the back. The channel is closed by both a pore ring composed of hydrophobic SecY resides and a short helix (helix 2A) on the extracellular side of the membrane which forms a plug. The plug probably moves laterally to allow the channel to open. The ring and the pore may move independently. The sequence is that of Protein translocase subunit SecY from Rickettsia felis (strain ATCC VR-1525 / URRWXCal2) (Rickettsia azadi).